Consider the following 312-residue polypeptide: Putative B3 domain-containing protein Os10g0537100 (312 aa).

The segment at residues 35–153 (FEKVVTPSDV…RLFIDFRRRR (119 aa)) is a DNA-binding region (TF-B3). Disordered stretches follow at residues 161-182 (FPPT…HPPL) and 286-312 (LLQL…DLGL). Residues 170–180 (HSHHHHQRHHP) are compositionally biased toward basic residues. Positions 286-301 (LLQLPSPSSSTSSSTA) are enriched in low complexity.

The protein localises to the nucleus. The sequence is that of Putative B3 domain-containing protein Os10g0537100 from Oryza sativa subsp. japonica (Rice).